Reading from the N-terminus, the 315-residue chain is Calcium homeostasis modulator protein 6 (315 aa).

Over 1 to 21 the chain is Cytoplasmic; sequence MEKFRAVLDLHVKHHSALGYG. The helical transmembrane segment at 22-37 threads the bilayer; sequence LVTLLTAGGERIFSAV. Residues 38 to 46 lie on the Extracellular side of the membrane; it reads AFQCPCSAA. Intrachain disulfides connect Cys-41–Cys-126, Cys-43–Cys-155, and Cys-139–Cys-146. A helical transmembrane segment spans residues 47-68; sequence WNLPYGLVFLLVPALALFLLGY. The Cytoplasmic segment spans residues 69-102; that stretch reads VLSARTWRLLTGCCSSARASCGSALRGSLVCTQI. A helical membrane pass occupies residues 103–127; it reads SAAAALAPLTWVAVALLGGAFYECA. At 128 to 169 the chain is on the extracellular side; sequence ATGSAAFAQRLCLGRNRSCAAELPLVPCNQAKASDVQDLLKD. A helical membrane pass occupies residues 170-192; that stretch reads LKAQSQVLGWILIAVVIIILLIF. The Cytoplasmic segment spans residues 193 to 315; the sequence is TSVTRCLSPV…SSGINSTPEL (123 aa).

Belongs to the CALHM family. As to quaternary structure, oligomerizes to form decameric and undecameric channels. Post-translationally, N-glycosylated. As to expression, placenta.

Its subcellular location is the cell membrane. The catalysed reaction is ATP(in) = ATP(out). Functionally, pore-forming subunit of an ATP-permeable channel. In response to pathogen-derived and proinflammatory stimuli, relocates from intracellular compartments to NK-dendritic cell and NK-macrophage immune synapses where it mediates ATP efflux and NK cell activation involved in antimicrobial and antitumor responses. May assemble to form gap junction channel-like structures with gating and ion conductance likely regulated by membrane lipids and voltage rather than by extracellular calcium levels. This chain is Calcium homeostasis modulator protein 6, found in Homo sapiens (Human).